A 335-amino-acid chain; its full sequence is Beta-ketoacyl-[acyl-carrier-protein] synthase III 2 (335 aa).

Residues Cys116 and His256 contribute to the active site. The tract at residues 257–261 is ACP-binding; that stretch reads QANVR. Residue Asn286 is part of the active site.

The protein belongs to the thiolase-like superfamily. FabH family. As to quaternary structure, homodimer.

It is found in the cytoplasm. The catalysed reaction is malonyl-[ACP] + acetyl-CoA + H(+) = 3-oxobutanoyl-[ACP] + CO2 + CoA. Its pathway is lipid metabolism; fatty acid biosynthesis. Functionally, catalyzes the condensation reaction of fatty acid synthesis by the addition to an acyl acceptor of two carbons from malonyl-ACP. Catalyzes the first condensation reaction which initiates fatty acid synthesis and may therefore play a role in governing the total rate of fatty acid production. Possesses both acetoacetyl-ACP synthase and acetyl transacylase activities. Its substrate specificity determines the biosynthesis of branched-chain and/or straight-chain of fatty acids. In Bacteroides thetaiotaomicron (strain ATCC 29148 / DSM 2079 / JCM 5827 / CCUG 10774 / NCTC 10582 / VPI-5482 / E50), this protein is Beta-ketoacyl-[acyl-carrier-protein] synthase III 2.